The primary structure comprises 463 residues: Cytidylate cyclase (463 aa).

A Guanylate cyclase domain is found at 122–231 (VTMFMDIIGS…IGIRIGIDLG (110 aa)). Phenylalanine 125 lines the a ribonucleoside 5'-triphosphate pocket. Positions 127, 128, and 171 each coordinate Mn(2+). The tract at residues 334–454 (KPSRIKVVIS…VISNDTVIER (121 aa)) is AGS-C domain.

Belongs to the adenylyl cyclase class-4/guanylyl cyclase family. Pyrimidine cyclase subfamily. Homodimer. It depends on Mn(2+) as a cofactor.

It localises to the cytoplasm. It carries out the reaction CTP = 3',5'-cyclic CMP + diphosphate. Its function is as follows. Pycsar (pyrimidine cyclase system for antiphage resistance) provides immunity against bacteriophage. The pyrimidine cyclase (PycC) synthesizes cyclic nucleotides in response to infection; these serve as specific second messenger signals. The signal activates the adjacent effector, leading to bacterial cell death and abortive phage infection. A clade E Pycsar system. The pyrimidine cyclase gene of a two-gene Pycsar system, generates cyclic CMP (cCMP) from CTP in response to bacteriophage infection. Has little to no activity on ATP, GTP or UTP. Expression of this and adjacent effector Ec303145PycTM (AC P0DV27) confers resistance to bacteriophage P1, T5, lambda-vir and phi27. The polypeptide is Cytidylate cyclase (Escherichia coli).